A 553-amino-acid chain; its full sequence is MSDIALTVSVLALVAVVGLWIGNIKIRGVGLGIGGVLFGGIFIGHFAEQLGITLSAEMLHFIQEFGLILFVYTIGIQVGPGFFASLRVSGLRLNLFALGIVVMGGVVTAILHKLFEIPLPVVLGIFSGAVTNTPALGAGQQILRDLGIAPDVVDQMGMSYAMAYPFGICGILLTMWLVRVLFRINVDDEAKKHESAITNGHALIKTINIRVENPNLSNMAIQDVPILNSISIICSRLKRGDMLMVPSPGTVIQIGDLLHLVGQPGDLHSAQLVIGQEVETSLSTRGTDMRVERVVVTNEQVLGKKIRDLQVKERYDVVISRLNRAGVELVASPDASLQFGDILNLVGRPSSIDAVADMVGNAQQKLQQVQMLPVFIGIGLGVLLGSIPLYVPGFPVALKLGLAGGPLIMALILGRIGCIGKLYWFMPPSANLALRELGIVLFLSVVGLKSGGDFIDTLAHGEGISWIGYGFFITAVPLLTIGILARIFTNMNYLTLCGMLAGSMTDPPALAFANNLHATSGAAALSYATVYPLVMFLRIITPQLLAVLFWGMG.

Transmembrane regions (helical) follow at residues 4 to 24, 28 to 48, 65 to 85, 95 to 115, and 158 to 178; these read IALT…IGNI, GVGL…HFAE, FGLI…FFAS, LFAL…HKLF, and MSYA…MWLV. RCK C-terminal domains are found at residues 191-276 and 279-361; these read KKHE…VIGQ and ETSL…MVGN. Helical transmembrane passes span 371–391, 403–425, 439–459, 464–484, 493–513, and 533–553; these read MLPV…PLYV, AGGP…LYWF, IVLF…DTLA, ISWI…IGIL, YLTL…LAFA, and LVMF…WGMG.

This sequence belongs to the AAE transporter (TC 2.A.81) family. YidE subfamily.

The protein localises to the cell membrane. This is Putative transport protein Ent638_0015 from Enterobacter sp. (strain 638).